Consider the following 147-residue polypeptide: Large ribosomal subunit protein uL22c (147 aa).

Belongs to the universal ribosomal protein uL22 family. Part of the 50S ribosomal subunit.

It localises to the plastid. This protein binds specifically to 23S rRNA. Its function is as follows. The globular domain of the protein is located near the polypeptide exit tunnel on the outside of the subunit, while an extended beta-hairpin is found that lines the wall of the exit tunnel in the center of the 70S ribosome. This is Large ribosomal subunit protein uL22c (rpl22) from Cuscuta obtusiflora (Peruvian dodder).